The sequence spans 1342 residues: DNA-directed RNA polymerase subunit beta (1342 aa).

This sequence belongs to the RNA polymerase beta chain family. The RNAP catalytic core consists of 2 alpha, 1 beta, 1 beta' and 1 omega subunit. When a sigma factor is associated with the core the holoenzyme is formed, which can initiate transcription.

It catalyses the reaction RNA(n) + a ribonucleoside 5'-triphosphate = RNA(n+1) + diphosphate. Its function is as follows. DNA-dependent RNA polymerase catalyzes the transcription of DNA into RNA using the four ribonucleoside triphosphates as substrates. In Yersinia enterocolitica serotype O:8 / biotype 1B (strain NCTC 13174 / 8081), this protein is DNA-directed RNA polymerase subunit beta.